The following is a 510-amino-acid chain: NAD(P) transhydrogenase subunit alpha (510 aa).

The Cytoplasmic portion of the chain corresponds to 1–401 (MRIGIPRERL…EEKCTCSPWR (401 aa)). NAD(+) is bound by residues 120-122 (RIS), valine 175, 195-197 (DTR), glutamate 238, and leucine 257. Helical transmembrane passes span 402 to 422 (KYAL…VAPK) and 423 to 443 (EFLG…YVVW). At 444–452 (NVSHALHTP) the chain is on the cytoplasmic side. The helical transmembrane segment at 453–473 (LMSVTNAISGIIVVGALLQIG) threads the bilayer. Over 474-476 (QGG) the chain is Periplasmic. A helical transmembrane segment spans residues 477–497 (WVSFLSFIAVLIASINIFGGF). Residues 498 to 510 (TVTQRMLKMFRKN) are Cytoplasmic-facing.

The protein belongs to the AlaDH/PNT family. Heterodimer of an alpha (PntA) and a beta (PntB) chain. Alpha subunit serves as the dimerization unit.

It localises to the cell inner membrane. The enzyme catalyses NAD(+) + NADPH + H(+)(in) = NADH + NADP(+) + H(+)(out). Functionally, the transhydrogenation between NADH and NADP is coupled to respiration and ATP hydrolysis and functions as a proton pump across the membrane. The sequence is that of NAD(P) transhydrogenase subunit alpha (pntA) from Escherichia coli (strain K12).